The chain runs to 282 residues: Protein FRG2-like-2 (282 aa).

A compositionally biased stretch (basic and acidic residues) spans 1–10 (MGKGNEDPDL). 2 disordered regions span residues 1 to 96 (MGKG…QENC) and 249 to 282 (GPGDSALDREAHPFPGQEITEPVSGSDEAKLGAP). Composition is skewed to polar residues over residues 13–31 (SSIQCSTDQPPFQQISFTE), 58–68 (RQAGSDPNPNK), and 79–94 (GNSTAGSEPESSSYQE).

This sequence belongs to the FRG2 family.

The protein localises to the nucleus. This chain is Protein FRG2-like-2 (FRG2C), found in Homo sapiens (Human).